The sequence spans 95 residues: RING finger protein Z (95 aa).

G2 carries the N-myristoyl glycine; by host lipid modification. The RING-type; atypical zinc finger occupies 38-74 (CKSCWFANKGLIKCSNHYLCLKCLTAMLSRSDYCGIC). A PTAP/PSAP motif motif is present at residues 88–91 (PSAP).

It belongs to the arenaviridae Z protein family. Interacts with protein NP; this interaction probably directs the encapsidated genome to budding sites. Interacts (via RING domain) with polymerase L; this interaction inhibits viral transcription and replication, Z partially blocks the product exit tunnel for the releasing nascent RNA product. Interacts with the glycoprotein complex; this interaction plays a role in virion budding. Interacts with host eIF4E; this interaction results in eIF4E reduced affinity for its substrate, the 5'-m7 G cap structure. Interacts (via late-budding domain) with host TSG101; this interaction is essential for budding and release of viral particles. Interacts with host RPLP0; this interaction may serve to load ribosome-like particles inside the virion. Interacts with host PML; this interaction induces PML bodies redistribution in the cytoplasm upon viral infection. Myristoylation is required for the role of RING finger protein Z in assembly and budding.

It is found in the virion. It localises to the host cytoplasm. The protein localises to the host perinuclear region. The protein resides in the host cell membrane. Plays a crucial role in virion assembly and budding. Expressed late in the virus life cycle, it acts as an inhibitor of viral transcription and RNA synthesis by interacting with the viral polymerase L. Presumably recruits the NP encapsidated genome to cellular membranes at budding sites via direct interaction with NP. Plays critical roles in the final steps of viral release by interacting with host TSG101, a member of the vacuolar protein-sorting pathway and using other cellular host proteins involved in vesicle formation pathway. The budding of the virus progeny occurs after association of protein Z with the viral glycoprotein complex SSP-GP1-GP2 at the cell periphery, step that requires myristoylation of protein Z. Also selectively represses protein production by associating with host eIF4E. In cell-based minigenome assay, has an inhibitory effect on the ribonucleoprotein machinery (vRNP), which is responsible for the replication and transcription of the viral genome. In Bear Canyon mammarenavirus (isolate Mouse/United States/AV A0070039/2000) (BCNV), this protein is RING finger protein Z.